We begin with the raw amino-acid sequence, 260 residues long: Methyl-coenzyme M reductase subunit gamma (260 aa).

Arg123 contributes to the coenzyme M binding site.

Belongs to the methyl-coenzyme M reductase gamma subunit family. MCR is a hexamer of two alpha, two beta, and two gamma chains, forming a dimer of heterotrimers. The cofactor is coenzyme F430.

The protein resides in the cytoplasm. It carries out the reaction coenzyme B + methyl-coenzyme M = methane + coenzyme M-coenzyme B heterodisulfide. Its pathway is one-carbon metabolism; methyl-coenzyme M reduction; methane from methyl-coenzyme M: step 1/1. Functionally, component of the methyl-coenzyme M reductase (MCR) I that catalyzes the reductive cleavage of methyl-coenzyme M (CoM-S-CH3 or 2-(methylthio)ethanesulfonate) using coenzyme B (CoB or 7-mercaptoheptanoylthreonine phosphate) as reductant which results in the production of methane and the mixed heterodisulfide of CoB and CoM (CoM-S-S-CoB). This is the final step in methanogenesis. The polypeptide is Methyl-coenzyme M reductase subunit gamma (mcrG) (Methanococcus vannielii).